The sequence spans 598 residues: (+)-bornyl diphosphate synthase, chloroplastic (598 aa).

The N-terminal 54 residues, 1-54, are a transit peptide targeting the chloroplast; sequence MSIISMNVSILSKPLNCLHNLERRPSKALLVPCTAPTARLRASCSSKLQEAHQI. Arginine 314 is a substrate binding site. Residues aspartate 351 and aspartate 355 each contribute to the Mg(2+) site. The short motif at 351–355 is the DDXXD motif element; it reads DDIYD. Arginine 493 lines the substrate pocket. Mg(2+) is bound by residues aspartate 496, threonine 500, and glutamate 504. Residue threonine 500 coordinates substrate. Lysine 512 contacts substrate.

The protein belongs to the terpene synthase family. Homodimer. The cofactor is Mg(2+).

The protein localises to the plastid. It localises to the chloroplast. It carries out the reaction (2E)-geranyl diphosphate = (2S,4R)-bornyl diphosphate. The enzyme catalyses (2E)-geranyl diphosphate = (1R,4S)-camphene + diphosphate. The catalysed reaction is (2E)-geranyl diphosphate = (1R,5R)-alpha-pinene + diphosphate. Its pathway is terpene metabolism; (R)-camphor biosynthesis. Catalyzes the formation of the (+)-camphor precursor (+)-bornyl diphosphate from geranyl diphosphate. The enzyme also produces significant amounts of (+)-alpha-pinene, (+)-camphene, and (+-)-limonene. The protein is (+)-bornyl diphosphate synthase, chloroplastic of Salvia officinalis (Sage).